The following is a 63-amino-acid chain: Large ribosomal subunit protein bL28 (63 aa).

It belongs to the bacterial ribosomal protein bL28 family.

The protein is Large ribosomal subunit protein bL28 of Clostridium perfringens (strain ATCC 13124 / DSM 756 / JCM 1290 / NCIMB 6125 / NCTC 8237 / Type A).